Here is a 78-residue protein sequence, read N- to C-terminus: Large ribosomal subunit protein bL28 (78 aa).

It belongs to the bacterial ribosomal protein bL28 family.

This chain is Large ribosomal subunit protein bL28, found in Marinobacter nauticus (strain ATCC 700491 / DSM 11845 / VT8) (Marinobacter aquaeolei).